We begin with the raw amino-acid sequence, 464 residues long: D-2-hydroxyglutarate dehydrogenase (464 aa).

The FAD-binding PCMH-type domain maps to 37-216; the sequence is FAPAPSAIVF…VEATMRLERQ (180 aa). (R)-2-hydroxyglutarate contacts are provided by R325, S329, and K339. Positions 325, 329, and 339 each coordinate (R)-malate. H374 and H381 together coordinate Zn(2+). Position 383 (N383) interacts with (R)-2-hydroxyglutarate. E420 contributes to the Zn(2+) binding site. H421 is a binding site for (R)-2-hydroxyglutarate. H421 is a binding site for (R)-malate.

This sequence belongs to the FAD-binding oxidoreductase/transferase type 4 family. Homodimer. It depends on FAD as a cofactor.

The catalysed reaction is (R)-2-hydroxyglutarate + A = 2-oxoglutarate + AH2. The enzyme catalyses (R)-malate + A = oxaloacetate + AH2. With respect to regulation, activated by Zn(2+) ions at low concentrations (10 uM) and inhibited by Zn(2+), Fe(2+) and Ni(2+) at high concentrations (10 mM). Its function is as follows. Catalyzes the dehydrogenation of (R)-2-hydroxyglutarate (D-2-hydroxyglutarate or D-2-HG) to 2-oxoglutarate and of (R)-malate (D-malate) to oxaloacetate. Is functionally tied to L-serine biosynthesis, via its coupling with the D-3-phosphoglycerate dehydrogenase SerA, encoded by the adjacent gene in the locus. Is required for the utilization of D-2-hydroxyglutarate as well as D-malate as the sole carbon source for growth of P.stutzeri. Active in vitro with artificial electron acceptors such as 2,6-dichlorophenolindophenol (DCPIP) and appears to couple with electron transfer flavoprotein (ETF) for efficient oxidation of both D-2-hydroxyglutarate and D-malate in vivo. Cannot catalyze the oxidation of L-2-hydroxyglutarate, D-lactate, D-tartrate, D-2-hydroxybutanoate, D-mandelate, D-glycerate and D-phenyllactate. This chain is D-2-hydroxyglutarate dehydrogenase, found in Stutzerimonas stutzeri (strain A1501) (Pseudomonas stutzeri).